Reading from the N-terminus, the 716-residue chain is Polyribonucleotide nucleotidyltransferase (716 aa).

Mg(2+)-binding residues include Asp485 and Asp491. The 60-residue stretch at 552 to 611 folds into the KH domain; sequence PKITTISVPKEKIRDVIGSGGKVIREIVEYSGAKVDIGDDGTVTIAASNDEQAQKAIARI. The 69-residue stretch at 621 to 689 folds into the S1 motif domain; it reads GRIYEGKVVK…DRGKVKLSMR (69 aa).

Belongs to the polyribonucleotide nucleotidyltransferase family. It depends on Mg(2+) as a cofactor.

It localises to the cytoplasm. The enzyme catalyses RNA(n+1) + phosphate = RNA(n) + a ribonucleoside 5'-diphosphate. Functionally, involved in mRNA degradation. Catalyzes the phosphorolysis of single-stranded polyribonucleotides processively in the 3'- to 5'-direction. This Gluconobacter oxydans (strain 621H) (Gluconobacter suboxydans) protein is Polyribonucleotide nucleotidyltransferase.